Reading from the N-terminus, the 245-residue chain is Complement C1q subcomponent subunit A (245 aa).

Positions 1–22 (MEGPRGWLVLCVLAISLASMVT) are cleaved as a signal peptide. Residues 27–38 (RAPDGKKGEAGR) are compositionally biased toward basic and acidic residues. Residues 27–114 (RAPDGKKGEA…SPGNIKDQPR (88 aa)) form a disordered region. One can recognise a Collagen-like domain in the interval 31-109 (GKKGEAGRPG…KGTKGSPGNI (79 aa)). 5-hydroxylysine is present on lysine 33. Residue lysine 33 is glycosylated (O-linked (Gal...) hydroxylysine). 4-hydroxyproline occurs at positions 39 and 45. Position 48 is a 5-hydroxylysine (lysine 48). Residue lysine 48 is glycosylated (O-linked (Gal...) hydroxylysine). 4-hydroxyproline is present on residues proline 54 and proline 57. Lysine 67 carries the 5-hydroxylysine modification. The O-linked (Gal...) hydroxylysine glycan is linked to lysine 67. Proline 73, proline 79, and proline 85 each carry 4-hydroxyproline. Lysine 100 bears the 5-hydroxylysine mark. A glycan (O-linked (Gal...) hydroxylysine) is linked at lysine 100. The region spanning 110-245 (KDQPRPAFSA…FSGFLIFPSA (136 aa)) is the C1q domain. Asparagine 146 carries an N-linked (GlcNAc...) asparagine glycan. Cysteines 172 and 190 form a disulfide. Glutamine 199 lines the Ca(2+) pocket.

Core component of the complement C1 complex, a calcium-dependent complex composed of 1 molecule of the C1Q subcomplex, 2 molecules of C1R and 2 molecules of C1S. The C1Q subcomplex is composed 18 subunits: 3 chains of C1QA, C1QB, and C1QC trimerize to form 6 collagen-like triple helices connected to six globular ligand-recognition modules (C1q domain). Interacts with CR1 (via Sushi 24 and Sushi 25 domains). Interacts (via C-terminus) with CD33; this interaction activates CD33 inhibitory motifs. In terms of assembly, (Microbial infection) Interacts with Staphylococcus aureus protein Cna; this interaction results in the inhibition of the classical complement pathway. Post-translationally, O-linked glycans are assumed to be the Glc-Gal disaccharides typically found as secondary modifications of hydroxylated lysines in collagen-like domains.

The protein localises to the secreted. The protein resides in the cell surface. Its activity is regulated as follows. The C1Q subcomplex is inhibited by sulfated molecules, such as triterpenoid sulfates, heparan sulfate, or chondroitin sulfates. Core component of the complement C1 complex, a multiprotein complex that initiates the classical pathway of the complement system, a cascade of proteins that leads to phagocytosis and breakdown of pathogens and signaling that strengthens the adaptive immune system. The classical complement pathway is initiated by the C1Q subcomplex of the C1 complex, which specifically binds IgG or IgM immunoglobulins complexed with antigens, forming antigen-antibody complexes on the surface of pathogens: C1QA, together with C1QB and C1QC, specifically recognizes and binds the Fc regions of IgG or IgM via its C1q domain. Immunoglobulin-binding activates the proenzyme C1R, which cleaves C1S, initiating the proteolytic cascade of the complement system. The C1Q subcomplex is activated by a hexamer of IgG complexed with antigens, while it is activated by a pentameric IgM. The C1Q subcomplex also recognizes and binds phosphatidylserine exposed on the surface of cells undergoing programmed cell death, possibly promoting activation of the complement system. This is Complement C1q subcomponent subunit A from Homo sapiens (Human).